A 117-amino-acid polypeptide reads, in one-letter code: Minor capsid protein VP2 (117 aa).

This sequence belongs to the lagovirus VP2 protein family. In terms of assembly, homooligomer. The portal-like structure consists in 12 copies of VP2. Interacts with capsid protein VP1.

The protein localises to the virion. The protein resides in the host cytoplasm. Functionally, minor structural protein that forms a portal-like structure at a unique three-fold axis of symmetry, following binding to the host receptor. The channel formed by VP2 may allow the delivery of the viral genome through the host endosomal membrane. The polypeptide is Minor capsid protein VP2 (Oryctolagus cuniculus (Rabbit)).